Reading from the N-terminus, the 163-residue chain is SKP1-like protein 3 (163 aa).

Residues 105–163 (LRAANYLNISGLLDLTCKAVADQMRGKTPAQMREHFNIKNDYTPEEEAEVRNENRWAFE) form an interaction with the F-box domain of F-box proteins region.

Belongs to the SKP1 family. In terms of assembly, part of a SCF (SKP1-cullin-F-box) protein ligase complex. Interacts with ADO3/FKF1 and At3g61590. In terms of tissue distribution, highly expressed in siliques.

Its subcellular location is the nucleus. The protein operates within protein modification; protein ubiquitination. In terms of biological role, involved in ubiquitination and subsequent proteasomal degradation of target proteins. Together with CUL1, RBX1 and a F-box protein, it forms a SCF E3 ubiquitin ligase complex. The functional specificity of this complex depends on the type of F-box protein. In the SCF complex, it serves as an adapter that links the F-box protein to CUL1. This is SKP1-like protein 3 (ASK3) from Arabidopsis thaliana (Mouse-ear cress).